We begin with the raw amino-acid sequence, 395 residues long: Probable peptidoglycan glycosyltransferase FtsW (395 aa).

Over 1–24 (MADLAAGVAERGPRLSLWSSLDQR) the chain is Cytoplasmic. The chain crosses the membrane as a helical span at residues 25–45 (LVWVVAATALLGLVMVASASI). At 46–62 (SMAEQATGDPFYFFKRQ) the chain is on the periplasmic side. The chain crosses the membrane as a helical span at residues 63 to 83 (IFFALLGLGMALALLQIPLAT). The Cytoplasmic portion of the chain corresponds to 84 to 86 (WER). The helical transmembrane segment at 87–107 (AGPGLLLGALALLVLVLIPGV) threads the bilayer. Over 108 to 116 (GREVNGAVR) the chain is Periplasmic. Residues 117–137 (WIPLGVFNLQVAEVVKVLLAL) traverse the membrane as a helical segment. Over 138–152 (YLAGFLVRRQQQLRT) the chain is Cytoplasmic. The helical transmembrane segment at 153–173 (SMAAFLVPVLVSAACAFLLLL) threads the bilayer. The Periplasmic segment spans residues 174 to 178 (QPDFG). The chain crosses the membrane as a helical span at residues 179–199 (TALMLMALAVGLLYLAGAPLW). Arg-200 is a topological domain (cytoplasmic). The chain crosses the membrane as a helical span at residues 201-221 (FAALVGVLAAAAAALVVYSPY). At 222–276 (RWQRVTAFMDPWSDPFNTGFQLTQSLIAIGRGDWLGVGLGGSVQKLFYLPEAHTD) the chain is on the periplasmic side. Residues 277-297 (FVFSVLAEELGWLGVLAVVLL) traverse the membrane as a helical segment. Residues 298-316 (FSYIVWRAMAVGWQCHRHR) are Cytoplasmic-facing. The chain crosses the membrane as a helical span at residues 317–337 (LPFAGYLAWAVGLALGLQAFI). Over 338–352 (NMGVATGLLPTKGLT) the chain is Periplasmic. The helical transmembrane segment at 353–373 (LPLFSYGGSSALATGAMVGLL) threads the bilayer. Over 374-395 (LRCGYELAQARAEGRRPEEAAS) the chain is Cytoplasmic.

This sequence belongs to the SEDS family. FtsW subfamily.

It localises to the cell inner membrane. The enzyme catalyses [GlcNAc-(1-&gt;4)-Mur2Ac(oyl-L-Ala-gamma-D-Glu-L-Lys-D-Ala-D-Ala)](n)-di-trans,octa-cis-undecaprenyl diphosphate + beta-D-GlcNAc-(1-&gt;4)-Mur2Ac(oyl-L-Ala-gamma-D-Glu-L-Lys-D-Ala-D-Ala)-di-trans,octa-cis-undecaprenyl diphosphate = [GlcNAc-(1-&gt;4)-Mur2Ac(oyl-L-Ala-gamma-D-Glu-L-Lys-D-Ala-D-Ala)](n+1)-di-trans,octa-cis-undecaprenyl diphosphate + di-trans,octa-cis-undecaprenyl diphosphate + H(+). The protein operates within cell wall biogenesis; peptidoglycan biosynthesis. Peptidoglycan polymerase that is essential for cell division. This is Probable peptidoglycan glycosyltransferase FtsW from Halorhodospira halophila (strain DSM 244 / SL1) (Ectothiorhodospira halophila (strain DSM 244 / SL1)).